We begin with the raw amino-acid sequence, 288 residues long: Small ribosomal subunit protein uS9m (288 aa).

The disordered stretch occupies residues 269 to 288; sequence VERKKPGKKKARKMPTWVKR.

This sequence belongs to the universal ribosomal protein uS9 family.

It localises to the mitochondrion. The chain is Small ribosomal subunit protein uS9m (MRPS9) from Candida glabrata (strain ATCC 2001 / BCRC 20586 / JCM 3761 / NBRC 0622 / NRRL Y-65 / CBS 138) (Yeast).